Here is a 405-residue protein sequence, read N- to C-terminus: Prostaglandin E2 receptor EP1 subtype (405 aa).

The Extracellular segment spans residues 1–39 (MSPCGLNLSLADEAATCATPRLPNTSVVLPTGDNGTSPA). 3 N-linked (GlcNAc...) asparagine glycosylation sites follow: Asn7, Asn24, and Asn34. The chain crosses the membrane as a helical span at residues 40–62 (LPIFSMTLGAVSNVLALALLAQV). Topologically, residues 63 to 80 (AGRMRRRRSAATFLLFVA) are cytoplasmic. The chain crosses the membrane as a helical span at residues 81–99 (SLLAIDLAGHVIPGALVLR). Topologically, residues 100-113 (LYTAGRAPAGGACH) are extracellular. An intrachain disulfide couples Cys112 to Cys190. Residues 114-135 (FLGGCMVFFGLCPLLLGCGMAV) traverse the membrane as a helical segment. Residues 136 to 157 (ERCVGVTQPLIHAARVSVARAR) are Cytoplasmic-facing. A helical transmembrane segment spans residues 158–179 (LALAVLAAMALAVALLPLVHVG). The Extracellular segment spans residues 180–202 (RYELQYPGTWCFISLGPRGGWRQ). Residues 203–228 (ALLAGLFAGLGLAALLAALVCNTLSG) traverse the membrane as a helical segment. Residues 229–301 (LALLRARWRR…HAHDVEMVGQ (73 aa)) lie on the Cytoplasmic side of the membrane. Positions 243 to 287 (RFRKTAGPDDRRRWGSRGPRLASASSASSITSATATLRSSRGGGS) are disordered. The segment covering 262 to 282 (RLASASSASSITSATATLRSS) has biased composition (low complexity). The chain crosses the membrane as a helical span at residues 302-323 (LVGIMVVSCICWSPLLVLVVLA). Topologically, residues 324–337 (IGGWNSNSLQRPLF) are extracellular. The helical transmembrane segment at 338-357 (LAVRLASWNQILDPWVYILL) threads the bilayer. Over 358–405 (RQAMLRQLLRLLPLRVSAKGGPTELGLTKSAWEASSLRSSRHSGFSHL) the chain is Cytoplasmic.

This sequence belongs to the G-protein coupled receptor 1 family. In terms of processing, phosphorylated. Abundant in kidney and in a lesser amount in lung.

The protein localises to the cell membrane. Receptor for prostaglandin E2 (PGE2). The activity of this receptor is mediated by G(q) proteins which activate a phosphatidylinositol-calcium second messenger system. May play a role as an important modulator of renal function. Implicated the smooth muscle contractile response to PGE2 in various tissues. The protein is Prostaglandin E2 receptor EP1 subtype (Ptger1) of Mus musculus (Mouse).